We begin with the raw amino-acid sequence, 51 residues long: uncharacterized protein (51 aa).

Residues Glu-3–Leu-30 adopt a coiled-coil conformation.

This is an uncharacterized protein from Bacillus subtilis (strain 168).